The chain runs to 78 residues: Small nuclear ribonucleoprotein F (78 aa).

The region spanning Asn7–Val78 is the Sm domain.

It belongs to the snRNP Sm proteins family. SmF/LSm6 subfamily. In terms of assembly, belongs to the 40S cdc5-associated complex (or cwf complex), a spliceosome sub-complex reminiscent of a late-stage spliceosome composed of the U2, U5 and U6 snRNAs and at least brr2, cdc5, cwf2/prp3, cwf3/syf1, cwf4/syf3, cwf5/ecm2, spp42/cwf6, cwf7/spf27, cwf8, cwf9, cwf10, cwf11, cwf12, prp45/cwf13, cwf14, cwf15, cwf16, cwf17, cwf18, cwf19, cwf20, cwf21, cwf22, cwf23, cwf24, cwf25, cwf26, cyp7/cwf27, cwf28, cwf29/ist3, lea1, msl1, prp5/cwf1, prp10, prp12/sap130, prp17, prp22, sap61, sap62, sap114, sap145, slu7, smb1, smd1, smd3, smf1, smg1 and syf2.

The protein localises to the nucleus. It is found in the cytoplasm. Functionally, plays a role in pre-mRNA splicing as a core component of the spliceosomal U1, U2, U4 and U5 small nuclear ribonucleoproteins (snRNPs), the building blocks of the spliceosome. In Schizosaccharomyces pombe (strain 972 / ATCC 24843) (Fission yeast), this protein is Small nuclear ribonucleoprotein F (smf1).